Consider the following 560-residue polypeptide: Dihydroxy-acid dehydratase (560 aa).

Aspartate 78 is a binding site for Mg(2+). Cysteine 119 provides a ligand contact to [2Fe-2S] cluster. Aspartate 120 and lysine 121 together coordinate Mg(2+). Lysine 121 carries the N6-carboxylysine modification. Cysteine 192 provides a ligand contact to [2Fe-2S] cluster. Glutamate 446 provides a ligand contact to Mg(2+). Catalysis depends on serine 472, which acts as the Proton acceptor.

The protein belongs to the IlvD/Edd family. In terms of assembly, homodimer. It depends on [2Fe-2S] cluster as a cofactor. Mg(2+) serves as cofactor.

It carries out the reaction (2R)-2,3-dihydroxy-3-methylbutanoate = 3-methyl-2-oxobutanoate + H2O. The catalysed reaction is (2R,3R)-2,3-dihydroxy-3-methylpentanoate = (S)-3-methyl-2-oxopentanoate + H2O. It functions in the pathway amino-acid biosynthesis; L-isoleucine biosynthesis; L-isoleucine from 2-oxobutanoate: step 3/4. The protein operates within amino-acid biosynthesis; L-valine biosynthesis; L-valine from pyruvate: step 3/4. In terms of biological role, functions in the biosynthesis of branched-chain amino acids. Catalyzes the dehydration of (2R,3R)-2,3-dihydroxy-3-methylpentanoate (2,3-dihydroxy-3-methylvalerate) into 2-oxo-3-methylpentanoate (2-oxo-3-methylvalerate) and of (2R)-2,3-dihydroxy-3-methylbutanoate (2,3-dihydroxyisovalerate) into 2-oxo-3-methylbutanoate (2-oxoisovalerate), the penultimate precursor to L-isoleucine and L-valine, respectively. This Anaeromyxobacter dehalogenans (strain 2CP-1 / ATCC BAA-258) protein is Dihydroxy-acid dehydratase.